Here is a 627-residue protein sequence, read N- to C-terminus: CTP synthase (627 aa).

In terms of domain architecture, Glutamine amidotransferase type-1 spans 300–554 (CIAVVGKYTK…LASVDRLNQY (255 aa)). Active-site for GATase activity residues include C399, H526, and E528. Phosphoserine is present on residues S567, S570, S571, and S588. T595 is modified (phosphothreonine). The segment covering 599–613 (GISKSCNGSISTSDS) has biased composition (polar residues). The tract at residues 599 to 627 (GISKSCNGSISTSDSEGACGGVDPTNGHK) is disordered.

The protein belongs to the CTP synthase family. As to expression, in ovary, expressed in oocytes, follicle cells and nurse cells. Also expressed in larval and adult testis (at protein level). In larvae, expressed in lymph gland, salivary gland, regions of the midgut, testis, optical lobe and trachea. Isoform 1 is expressed in adult testis, ovary, accessory gland and head. Isoform 2 is weakly expressed in ovary.

The protein localises to the cytoplasm. The catalysed reaction is UTP + L-glutamine + ATP + H2O = CTP + L-glutamate + ADP + phosphate + 2 H(+). It functions in the pathway pyrimidine metabolism; CTP biosynthesis via de novo pathway; CTP from UDP: step 2/2. Functionally, catalyzes the ATP-dependent amination of UTP to CTP with either L-glutamine or ammonia as the source of nitrogen. Constitutes the rate-limiting enzyme in the synthesis of cytosine nucleotides. Its function is as follows. Required for assembly of cytoophidium in female germline cells. In nurse cells, CTPsyn filament assembly in the cytoophidium is regulated by Ack kinase which may thereby contribute to the control of CTP production at specific stages of oogenesis and development of the nurse cell membrane. The sequence is that of CTP synthase from Drosophila melanogaster (Fruit fly).